The sequence spans 368 residues: MKLSGVELRRVQMPLVAPFRTSFGTQSVRELLLLRAVTPAGEGWGECVTMAGPLYSSEYNDGAEHVLRHYLIPALLAAEDITAAKVTPLLAKFKGHRMAKGALEMAVLDAELRAHERSFAAELGSVRDSVPCGVSVGIMDTIPQLLDVVGGYLDEGYVRIKLKIEPGWDVEPVRAVRERFGDDVLLQVDANTAYTLGDAPQLARLDPFGLLLIEQPLEEEDVLGHAELARRIQTPICLDESIVSARAAADAIKLGAVQIVNIKPGRVGGYLEARRVHDVCAAHGIPVWCGGMIETGLGRAANVALASLPNFTLPGDTSASDRFYKTDITEPFVLSGGHLPVPTGPGLGVAPIPELLDEVTTAKVWIGS.

2-succinylbenzoate is bound by residues Ser-135 and 161–163; that span reads KLK. Lys-163 acts as the Proton donor in catalysis. Asp-189 provides a ligand contact to Mg(2+). Asn-191 provides a ligand contact to 2-succinylbenzoate. Mg(2+)-binding residues include Glu-214 and Asp-239. Lys-263 serves as the catalytic Proton acceptor. Ile-293 is a 2-succinylbenzoate binding site.

Belongs to the mandelate racemase/muconate lactonizing enzyme family. MenC type 2 subfamily. Homooctamer. A divalent metal cation serves as cofactor.

The catalysed reaction is N-acetyl-D-methionine = N-acetyl-L-methionine. It carries out the reaction (1R,6R)-6-hydroxy-2-succinyl-cyclohexa-2,4-diene-1-carboxylate = 2-succinylbenzoate + H2O. Its activity is regulated as follows. Inhibited by EDTA and sulfhydryl reagents such as p-chloromercuribenzoic acid. Both OSBS and NAAAR activities are inhibited competitively by salicylhydroxamate. Acts as a N-succinylamino acid racemase (NSAR) that catalyzes the racemization of N-succinyl-phenylglycine and N-succinyl-methionine. Can catalyze the racemization of a broad range of N-acylamino acids, including N-acetyl-D/L-methionine, N-propionyl-D/L-methionine, N-butyryl-D/L-methionine and N-chloroacetyl-L-valine. Also converts 2-succinyl-6-hydroxy-2,4-cyclohexadiene-1-carboxylate (SHCHC) to 2-succinylbenzoate (OSB). Catalyzes both N-succinylamino acid racemization and OSB synthesis at equivalent rates. NSAR is probably the biological function of this enzyme. This is N-succinylamino acid racemase from Amycolatopsis sp.